The sequence spans 544 residues: MAITGGMQSSDMVLLLWITVICACCSFVDSSRSHRQLITSPSTTGVCRYGIKAECCYGWKRNRKGQCEAVCEQGCKHGECVGPNKCKCFPGFTGKNCNQDLNECGLKPRPCEHRCMNTHGSYKCYCLNGYMLMPDGSCSNSRTCAMANCQYGCEQVKGDIRCLCPSGGLQLGPDGRTCIDIDECAVGKASCPINRRCVNTFGSYYCKCQIGYELKYVNGRYDCIDINECLLNTHKCSINADCLNTQGSFKCRCKHGFKGNGQECSAVFNKPVKESPKFGGSVKDAIKKLLAHKNSLNRYNDIKNVIPETFITPPPKNRLQPFDYEDGVYIGGNDNDEEEGEIEEEEEEELDEEDEENVIEEEKLLRGDVFARQVKRAAVLSSQPISNTDPVLKSDEVLVDCRFDQGTCEWKQDSKDDFDWKHAERHNGNGYYMSVPASTSQKKGIGRLKLQLTKIYYKYCLMFIYRLAGERVGKLRVYIDENINPIWEETKNRDEGWRTAKIEIQESSTRKSSSITFEAVRGKDEAGIMALDNVFLSSGPCSDD.

The first 30 residues, 1-30 (MAITGGMQSSDMVLLLWITVICACCSFVDS), serve as a signal peptide directing secretion. Residues 63–98 (RKGQCEAVCEQGCKHGECVGPNKCKCFPGFTGKNCN) enclose the EGF-like 1 domain. Disulfide bonds link C67/C80, C71/C86, C88/C97, C104/C115, C111/C124, and C126/C138. Positions 100 to 139 (DLNECGLKPRPCEHRCMNTHGSYKCYCLNGYMLMPDGSCS) constitute an EGF-like 2; calcium-binding domain. The region spanning 144–178 (CAMANCQYGCEQVKGDIRCLCPSGGLQLGPDGRTC) is the EGF-like 3 domain. Residues 180 to 218 (DIDECAVGKASCPINRRCVNTFGSYYCKCQIGYELKYVN) enclose the EGF-like 4; calcium-binding domain. Disulfide bonds link C184–C197, C191–C206, C229–C242, C236–C251, and C253–C264. Positions 225–265 (DINECLLNTHKCSINADCLNTQGSFKCRCKHGFKGNGQECS) constitute an EGF-like 5; calcium-binding domain. Residues 332 to 357 (GNDNDEEEGEIEEEEEEELDEEDEEN) form a disordered region. Residues 333-367 (NDNDEEEGEIEEEEEEELDEEDEENVIEEEKLLRG) adopt a coiled-coil conformation. Positions 334–357 (DNDEEEGEIEEEEEEELDEEDEEN) are enriched in acidic residues. The MAM domain maps to 399–543 (VDCRFDQGTC…VFLSSGPCSD (145 aa)).

The protein belongs to the nephronectin family.

Its subcellular location is the secreted. It is found in the extracellular space. The protein localises to the extracellular matrix. The protein resides in the basement membrane. Functionally, may play a role in organ morphogenesis. Promotes matrix assembly. The protein is Epidermal growth factor-like protein 6 (egfl6) of Xenopus laevis (African clawed frog).